The primary structure comprises 462 residues: Sensor histidine kinase RegB (462 aa).

Topologically, residues 1-25 are cytoplasmic; that stretch reads MILGPDGILNRDTRGDWWRLRTLIL. A helical membrane pass occupies residues 26–45; the sequence is LRWMAVAGQLAAIVVTDWYL. Residues 46 to 51 lie on the Extracellular side of the membrane; that stretch reads GVRLPM. Residues 52–70 form a helical membrane-spanning segment; it reads GLCFMAVGASVIANVIATF. The Cytoplasmic portion of the chain corresponds to 71 to 78; that stretch reads VFPQNRRL. The chain crosses the membrane as a helical span at residues 79–96; it reads TEFQALMILLFDLTQLSF. Residues 97-103 are Extracellular-facing; the sequence is LLFLTGG. Residues 104–123 form a helical membrane-spanning segment; the sequence is LTNPFALLILAPVTISGVAL. Topologically, residues 124–129 are cytoplasmic; the sequence is DVRTTV. A helical membrane pass occupies residues 130-149; that stretch reads ILGAIAIGLLTFTAYFHLPL. Topologically, residues 150 to 164 are extracellular; sequence ILADGSSLSVPRMFE. A helical membrane pass occupies residues 165–182; the sequence is FGFWLAIVIGILFLGLYS. Over 183-462 the chain is Cytoplasmic; the sequence is RRVAIEIRSM…PLGENVLIQT (280 aa). The 228-residue stretch at 218–445 folds into the Histidine kinase domain; it reads AAAHELGTPL…IVEVIWPVDR (228 aa). His221 is subject to Phosphohistidine; by autocatalysis.

It localises to the cell inner membrane. The catalysed reaction is ATP + protein L-histidine = ADP + protein N-phospho-L-histidine.. In terms of biological role, member of the two-component regulatory system RegB/RegA. Involved in the positive regulation of photosynthesis gene expression in response to anaerobiosis. Also involved in positive regulation of the cbbI and cbbII Calvin cycle CO2 fixation operons, as well as in regulation of expression of genes involved in alternative CO2 fixation pathways. Phosphorylates RegA/PrrA. The sequence is that of Sensor histidine kinase RegB (regB) from Cereibacter sphaeroides (Rhodobacter sphaeroides).